The primary structure comprises 104 residues: Large ribosomal subunit protein uL23 (104 aa).

This sequence belongs to the universal ribosomal protein uL23 family. Part of the 50S ribosomal subunit. Contacts protein L29, and trigger factor when it is bound to the ribosome.

Its function is as follows. One of the early assembly proteins it binds 23S rRNA. One of the proteins that surrounds the polypeptide exit tunnel on the outside of the ribosome. Forms the main docking site for trigger factor binding to the ribosome. The chain is Large ribosomal subunit protein uL23 from Nostoc punctiforme (strain ATCC 29133 / PCC 73102).